The following is a 1039-amino-acid chain: Beta-galactosidase (1039 aa).

Asn-103 and Asp-201 together coordinate substrate. Asp-201 lines the Na(+) pocket. Mg(2+) contacts are provided by Glu-415, His-417, and Glu-460. Substrate contacts are provided by residues Glu-460 and 536 to 539 (EYAH). Glu-460 functions as the Proton donor in the catalytic mechanism. Catalysis depends on Glu-536, which acts as the Nucleophile. A Mg(2+)-binding site is contributed by Asn-596. Residues Phe-600 and Asn-603 each coordinate Na(+). Residues Asn-603 and Trp-1012 each contribute to the substrate site.

It belongs to the glycosyl hydrolase 2 family. In terms of assembly, homotetramer. It depends on Mg(2+) as a cofactor. Requires Na(+) as cofactor.

The enzyme catalyses Hydrolysis of terminal non-reducing beta-D-galactose residues in beta-D-galactosides.. Its activity is regulated as follows. Inhibited by zinc, copper and nickel ions. Activated by 2-mercaptoethanol and inhibited by EDTA in vitro. The sequence is that of Beta-galactosidase (lacZ) from Pseudoalteromonas haloplanktis (Alteromonas haloplanktis).